We begin with the raw amino-acid sequence, 282 residues long: Shikimate dehydrogenase (NADP(+)) (282 aa).

Shikimate contacts are provided by residues 15–17 (SKS) and Thr62. The active-site Proton acceptor is the Lys66. Residues Asn87 and Asp103 each contribute to the shikimate site. Residues 127–131 (GAGGA), 151–156 (NRTHTK), and Met220 each bind NADP(+). A shikimate-binding site is contributed by Tyr222. Position 244 (Gly244) interacts with NADP(+).

Belongs to the shikimate dehydrogenase family. In terms of assembly, homodimer.

It carries out the reaction shikimate + NADP(+) = 3-dehydroshikimate + NADPH + H(+). It participates in metabolic intermediate biosynthesis; chorismate biosynthesis; chorismate from D-erythrose 4-phosphate and phosphoenolpyruvate: step 4/7. Its function is as follows. Involved in the biosynthesis of the chorismate, which leads to the biosynthesis of aromatic amino acids. Catalyzes the reversible NADPH linked reduction of 3-dehydroshikimate (DHSA) to yield shikimate (SA). This Shewanella putrefaciens (strain CN-32 / ATCC BAA-453) protein is Shikimate dehydrogenase (NADP(+)).